The following is a 288-amino-acid chain: Pantothenate synthetase (288 aa).

Residue 30 to 37 participates in ATP binding; that stretch reads MGALHEGH. His37 (proton donor) is an active-site residue. Gln61 serves as a coordination point for (R)-pantoate. Gln61 is a beta-alanine binding site. 147–150 provides a ligand contact to ATP; the sequence is GEKD. Gln153 contacts (R)-pantoate. ATP is bound by residues Leu176 and 184-187; that span reads ISSR.

The protein belongs to the pantothenate synthetase family. As to quaternary structure, homodimer.

It localises to the cytoplasm. The catalysed reaction is (R)-pantoate + beta-alanine + ATP = (R)-pantothenate + AMP + diphosphate + H(+). The protein operates within cofactor biosynthesis; (R)-pantothenate biosynthesis; (R)-pantothenate from (R)-pantoate and beta-alanine: step 1/1. Its function is as follows. Catalyzes the condensation of pantoate with beta-alanine in an ATP-dependent reaction via a pantoyl-adenylate intermediate. This is Pantothenate synthetase from Prosthecochloris aestuarii (strain DSM 271 / SK 413).